Here is a 498-residue protein sequence, read N- to C-terminus: Early growth response protein 1 (498 aa).

2 disordered regions span residues 137 to 203 and 287 to 308; these read NASP…TASI and PSRM…RPYA. Residues 139–163 show a composition bias toward low complexity; it reads SPSSAPSSSPSSSSSSSQSPPLSCS. Residues 179 to 202 show a composition bias toward polar residues; it reads FPNSSPELFPDQSPQPFQNASTAS. C2H2-type zinc fingers lie at residues 307 to 331, 337 to 359, and 365 to 387; these read YACP…IRIH, FQCR…IRTH, and FACD…TKIH. Positions 378–422 are disordered; it reads DERKRHTKIHLRQKDKKADKATPVSVASPVSSYSPSASTSYPSPV. Residues 382 to 392 are compositionally biased toward basic residues; sequence RHTKIHLRQKD. The segment covering 398–422 has biased composition (low complexity); that stretch reads ATPVSVASPVSSYSPSASTSYPSPV.

Belongs to the EGR C2H2-type zinc-finger protein family.

The protein resides in the nucleus. It is found in the cytoplasm. In terms of biological role, transcriptional regulator. Recognizes and binds to the DNA sequence 5'-GCG(T/G)GGGCG-3'(EGR-site) in the promoter region of target genes. Binds double-stranded target DNA, irrespective of the cytosine methylation status. Regulates the transcription of numerous target genes, and thereby plays an important role in regulating the response to growth factors, DNA damage, and ischemia. Plays a role in the regulation of cell survival, proliferation and cell death. Mediates responses to ischemia and hypoxia; regulates the expression of proteins that are involved in inflammatory processes. Plays a role in regulating the expression of circadian clock genes. This Xenopus tropicalis (Western clawed frog) protein is Early growth response protein 1.